The chain runs to 20 residues: ATP synthase subunit beta, chloroplastic (20 aa).

Positions 1 to 10 (METTNESLGY) are enriched in polar residues. The disordered stretch occupies residues 1–20 (METTNESLGYTDQIIGPVLD).

The protein belongs to the ATPase alpha/beta chains family. F-type ATPases have 2 components, CF(1) - the catalytic core - and CF(0) - the membrane proton channel. CF(1) has five subunits: alpha(3), beta(3), gamma(1), delta(1), epsilon(1). CF(0) has four main subunits: a(1), b(1), b'(1) and c(9-12).

It localises to the plastid. The protein resides in the chloroplast thylakoid membrane. The enzyme catalyses ATP + H2O + 4 H(+)(in) = ADP + phosphate + 5 H(+)(out). Its function is as follows. Produces ATP from ADP in the presence of a proton gradient across the membrane. The catalytic sites are hosted primarily by the beta subunits. The polypeptide is ATP synthase subunit beta, chloroplastic (Chattonella marina var. antiqua (Red tide flagellate)).